The sequence spans 482 residues: MTAKTLYDKLWDLHEVTRRDDGSSLIYIDRHILHEVTSPQAFEGLRLAGRKPWRIDANIATPDHNVPTTRAERQGGLESISDEVSRLQVQTLDENCDDFGILEFKMNDTRQGIVHVVGPEQGATLPGMTVVCGDSHTSTHGAFGALAHGIGTSEVEHVLATQCLIAKKMKNMQVRVEGTLPFGVTAKDIVLAVIGKIGTAGGNGHALEFAGSAIRAASMEGRMTICNMAIEAGARVGMVAVDEKTIAYVKGRPFAPKGAHWDAAVALWSTLVSDPDAHFDTVVELRAEDIKPQVSWGTSPEMVLAIDQHVPDPAAEQDPTKRDSIERALKYMGLTANQPITAIRLDRVFIGSCTNSRIEDLRAAAAVAKGRKVASTIKQALVVPGSGLVKAQAEAEGLDKVFLDAGFEWREPGCSMCLAMNPDKLGSGEHCASTSNRNFEGRQGAGGRTHLVSPAMAAAAAVSGHFVDVRELGDSGVGIRDS.

A disordered region spans residues 60 to 79; that stretch reads ATPDHNVPTTRAERQGGLES. The [4Fe-4S] cluster site is built by cysteine 353, cysteine 414, and cysteine 417.

The protein belongs to the aconitase/IPM isomerase family. LeuC type 1 subfamily. Heterodimer of LeuC and LeuD. It depends on [4Fe-4S] cluster as a cofactor.

It catalyses the reaction (2R,3S)-3-isopropylmalate = (2S)-2-isopropylmalate. The protein operates within amino-acid biosynthesis; L-leucine biosynthesis; L-leucine from 3-methyl-2-oxobutanoate: step 2/4. Catalyzes the isomerization between 2-isopropylmalate and 3-isopropylmalate, via the formation of 2-isopropylmaleate. The protein is 3-isopropylmalate dehydratase large subunit of Xanthomonas euvesicatoria pv. vesicatoria (strain 85-10) (Xanthomonas campestris pv. vesicatoria).